A 120-amino-acid polypeptide reads, in one-letter code: MFLLYEYDIFWAFLIISSVIPILAFFISGVLAPISKGPEKLSSYESGIEPMGDAWLQFRIRYYMFALVFVVFDVETVFLYPWAMSFDVLGVSVFIEALIFVLILIVGSVYAWRKGALEWS.

3 consecutive transmembrane segments (helical) span residues 9-29 (IFWA…FISG), 64-84 (MFAL…PWAM), and 88-108 (VLGV…IVGS).

This sequence belongs to the complex I subunit 3 family. NDH is composed of at least 16 different subunits, 5 of which are encoded in the nucleus.

It localises to the plastid. It is found in the chloroplast thylakoid membrane. The catalysed reaction is a plastoquinone + NADH + (n+1) H(+)(in) = a plastoquinol + NAD(+) + n H(+)(out). The enzyme catalyses a plastoquinone + NADPH + (n+1) H(+)(in) = a plastoquinol + NADP(+) + n H(+)(out). Functionally, NDH shuttles electrons from NAD(P)H:plastoquinone, via FMN and iron-sulfur (Fe-S) centers, to quinones in the photosynthetic chain and possibly in a chloroplast respiratory chain. The immediate electron acceptor for the enzyme in this species is believed to be plastoquinone. Couples the redox reaction to proton translocation, and thus conserves the redox energy in a proton gradient. The protein is NAD(P)H-quinone oxidoreductase subunit 3, chloroplastic of Vitis vinifera (Grape).